The chain runs to 191 residues: Peptidyl-tRNA hydrolase (191 aa).

Tyr17 provides a ligand contact to tRNA. Residue His22 is the Proton acceptor of the active site. 3 residues coordinate tRNA: Tyr68, Asn70, and Asn116.

It belongs to the PTH family. Monomer.

It is found in the cytoplasm. The enzyme catalyses an N-acyl-L-alpha-aminoacyl-tRNA + H2O = an N-acyl-L-amino acid + a tRNA + H(+). Functionally, hydrolyzes ribosome-free peptidyl-tRNAs (with 1 or more amino acids incorporated), which drop off the ribosome during protein synthesis, or as a result of ribosome stalling. In terms of biological role, catalyzes the release of premature peptidyl moieties from peptidyl-tRNA molecules trapped in stalled 50S ribosomal subunits, and thus maintains levels of free tRNAs and 50S ribosomes. The chain is Peptidyl-tRNA hydrolase from Mycobacterium tuberculosis (strain ATCC 25177 / H37Ra).